The primary structure comprises 246 residues: Proteasome subunit alpha (246 aa).

Belongs to the peptidase T1A family. As to quaternary structure, the 20S proteasome core is composed of 14 alpha and 14 beta subunits that assemble into four stacked heptameric rings, resulting in a barrel-shaped structure. The two inner rings, each composed of seven catalytic beta subunits, are sandwiched by two outer rings, each composed of seven alpha subunits. The catalytic chamber with the active sites is on the inside of the barrel. Has probably a gated structure, the ends of the cylinder being occluded by the N-termini of the alpha-subunits. Is likely capped at one or both ends by the proteasome regulatory ATPase, PAN.

It localises to the cytoplasm. Its activity is regulated as follows. The formation of the proteasomal ATPase PAN-20S proteasome complex, via the docking of the C-termini of PAN into the intersubunit pockets in the alpha-rings, triggers opening of the gate for substrate entry. Interconversion between the open-gate and close-gate conformations leads to a dynamic regulation of the 20S proteasome proteolysis activity. Component of the proteasome core, a large protease complex with broad specificity involved in protein degradation. The protein is Proteasome subunit alpha of Archaeoglobus fulgidus (strain ATCC 49558 / DSM 4304 / JCM 9628 / NBRC 100126 / VC-16).